A 1059-amino-acid chain; its full sequence is Ceruloplasmin (1059 aa).

Residues Met1–Thr19 form the signal peptide. Plastocyanin-like domains follow at residues Arg20 to Cys199, Lys208 to Cys356, His369 to Cys554, Arg564 to Cys712, Gly724 to Cys894, and Phe902 to Glu1055. The Na(+) site is built by Tyr55, Gly64, and Tyr67. Cu(2+) is bound by residues His120 and His122. His120 provides a ligand contact to O2. Lys128 is a Ca(2+) binding site. N-linked (GlcNAc...) asparagine glycosylation occurs at Asn138. Gln143, Asp146, and Asp147 together coordinate Ca(2+). Residues Cys173 and Cys199 are joined by a disulfide bond. Cu(2+)-binding residues include His179 and His181. His179 is a binding site for O2. Asn226 carries an N-linked (GlcNAc...) asparagine glycan. Residue Ser255 coordinates Na(+). Cys275 and Cys356 are joined by a disulfide. Residues His294, Cys337, and His342 each contribute to the Cu(2+) site. A glycan (N-linked (GlcNAc...) asparagine) is linked at Asn396. The Na(+) site is built by Phe407, Gly416, and Tyr419. A disulfide bridge links Cys528 with Cys554. Asn582 carries N-linked (GlcNAc...) asparagine glycosylation. Ser611 provides a ligand contact to Na(+). The cysteines at positions 631 and 712 are disulfide-linked. His650, Cys693, His698, and Met703 together coordinate Cu(2+). The active-site Nucleophile; for glutathione peroxidase activity is Cys693. Asn756 is a glycosylation site (N-linked (GlcNAc...) asparagine). Na(+) contacts are provided by Phe761, Gly770, and Tyr773. Cysteines 868 and 894 form a disulfide. Residue Asn920 is glycosylated (N-linked (GlcNAc...) asparagine). Residue Ser949 coordinates Na(+). His988, His991, His993, His1033, Cys1034, His1035, His1039, and Met1044 together coordinate Cu(2+). His991 and His993 together coordinate O2. His1035 is a binding site for O2.

This sequence belongs to the multicopper oxidase family. Found in a complex with MPO and LTF; interacts directly with MPO and LTF, which allows Fe(3+) incorporation into LTF, activation of CP ferroxidase activity and protection of CP antioxidant properties by MPO. Cu(2+) serves as cofactor. In terms of tissue distribution, synthesized in liver and secreted into the plasma. Also choroid plexus, yolk sac, placenta, and testis; not in stomach and small intestine. Fetal lung and liver.

The protein resides in the secreted. It carries out the reaction 4 Fe(2+) + O2 + 4 H(+) = 4 Fe(3+) + 2 H2O. The catalysed reaction is 4 Cu(+) + O2 + 4 H(+) = 4 Cu(2+) + 2 H2O. It catalyses the reaction a hydroperoxide + 2 glutathione = an alcohol + glutathione disulfide + H2O. The enzyme catalyses 4 nitric oxide + O2 + 2 H2O = 4 nitrite + 4 H(+). It carries out the reaction 2 glutathione + H2O2 = glutathione disulfide + 2 H2O. In terms of biological role, multifunctional blue, copper-binding (6-7 atoms per molecule) glycoprotein. It has ferroxidase activity oxidizing Fe(2+) to Fe(3+) without releasing radical oxygen species. It is involved in iron transport across the cell membrane. Copper ions provide a large number of enzymatic activites. Oxidizes highly toxic ferrous ions to the ferric state for further incorporation onto apo-transferrins, catalyzes Cu(+) oxidation and promotes the oxidation of biogenic amines such as norepinephrin and serotonin. Provides Cu(2+) ions for the ascorbate-mediated deaminase degradation of the heparan sulfate chains of GPC1. Has glutathione peroxidase-like activity, can remove both hydrogen peroxide and lipid hydroperoxide in the presence of thiols. Also shows NO-oxidase and NO2 synthase activities that determine endocrine NO homeostasis. In Rattus norvegicus (Rat), this protein is Ceruloplasmin (Cp).